We begin with the raw amino-acid sequence, 363 residues long: Putative transcriptional activator MSA2 (363 aa).

Residues 1–20 (MVYTTPQQQQRFSSTPQSSH) form a disordered region. Residues Ser157 and Ser292 each carry the phosphoserine modification.

In terms of assembly, interacts with transcription complexes SCB-binding factor (SBF) and MCB-binding factor (MBF). Interacts with SWI4.

This Saccharomyces cerevisiae (strain ATCC 204508 / S288c) (Baker's yeast) protein is Putative transcriptional activator MSA2 (MSA2).